A 1930-amino-acid chain; its full sequence is Ankyrin repeat domain-containing protein SAT10 (1930 aa).

ANK repeat units follow at residues 840-872 (FRHT…DLEE), 878-908 (GTWN…GVLN), 920-949 (SGNT…MRGY), 959-989 (QRSS…DYSK), 993-1023 (NGAS…FSNE), 1073-1102 (SGLT…DANG), 1106-1135 (EFEA…TKTE), 1144-1174 (GRTR…QLSH), 1178-1205 (NQRT…ETET), 1206-1235 (GLQE…EINA), 1239-1268 (YGNT…RLDL), 1272-1301 (DNVN…DVNA), 1304-1333 (GGDT…KFIL), 1339-1368 (RFEN…ERDL), 1400-1429 (SGWT…GRAA), 1514-1543 (QNML…SLTP), 1548-1577 (RHGT…MLAD), 1615-1644 (MGRN…NEDL), 1651-1680 (DGWT…KIFD), and 1696-1724 (KTWT…TTSD).

The protein operates within mycotoxin biosynthesis. In terms of biological role, ankyrin repeat domain-containing protein; part of the satratoxin SC1 cluster involved in the biosynthesis of satratoxins, trichothecene mycotoxins that are associated with human food poisonings. Satratoxins are suggested to be made by products of multiple gene clusters (SC1, SC2 and SC3) that encode 21 proteins in all, including polyketide synthases, acetyltransferases, and other enzymes expected to modify the trichothecene skeleton. SC1 encodes 10 proteins, SAT1 to SAT10. The largest are SAT8, which encodes a putative polyketide synthase (PKS) with a conventional non-reducing architecture, and SAT10, a putative protein containing four ankyrin repeats and thus may be involved in protein scaffolding. The putative short-chain reductase SAT3 may assist the PKS in some capacity. SAT6 contains a secretory lipase domain and acts probably as a trichothecene esterase. SAT5 encodes a putative acetyltransferase, and so, with SAT6, may affect endogenous protection from toxicity. The probable transcription factor SAT9 may regulate the expression of the SC1 cluster. SC2 encodes proteins SAT11 to SAT16, the largest of which encodes the putative reducing PKS SAT13. SAT11 is a cytochrome P450 monooxygenase, while SAT14 and SAT16 are probable acetyltransferases. The SC2 cluster may be regulated by the transcription factor SAT15. SC3 is a small cluster that encodes 5 proteins, SAT17 to SAT21. SAT21 is a putative MFS-type transporter which may have a role in exporting secondary metabolites. The four other proteins putatively encoded in SC3 include the taurine hydroxylase-like protein SAT17, the O-methyltransferase SAT18, the acetyltransferase SAT19, and the Cys6-type zinc finger SAT20, the latter being probably involved in regulation of SC3 expression. The protein is Ankyrin repeat domain-containing protein SAT10 of Stachybotrys chartarum (strain CBS 109288 / IBT 7711) (Toxic black mold).